Here is a 374-residue protein sequence, read N- to C-terminus: tRNA-specific 2-thiouridylase MnmA (374 aa).

Residues 13–20 (GMSGGVDS) and methionine 39 contribute to the ATP site. The interval 99 to 101 (NPD) is interaction with target base in tRNA. Cysteine 104 (nucleophile) is an active-site residue. Cysteine 104 and cysteine 201 are oxidised to a cystine. Glycine 128 is a binding site for ATP. The tract at residues 151–153 (KDQ) is interaction with tRNA. Residue cysteine 201 is the Cysteine persulfide intermediate of the active site. The tract at residues 313-314 (RY) is interaction with tRNA.

The protein belongs to the MnmA/TRMU family.

It is found in the cytoplasm. It carries out the reaction S-sulfanyl-L-cysteinyl-[protein] + uridine(34) in tRNA + AH2 + ATP = 2-thiouridine(34) in tRNA + L-cysteinyl-[protein] + A + AMP + diphosphate + H(+). Functionally, catalyzes the 2-thiolation of uridine at the wobble position (U34) of tRNA, leading to the formation of s(2)U34. This chain is tRNA-specific 2-thiouridylase MnmA, found in Streptococcus equi subsp. zooepidemicus (strain H70).